A 174-amino-acid chain; its full sequence is Protein GrpE (174 aa).

A disordered region spans residues 1–35 (MAQDIKNEEVEEVQEEEVVETAEETTPEKSELDLA). Positions 9 to 25 (EVEEVQEEEVVETAEET) are enriched in acidic residues. The span at 26–35 (TPEKSELDLA) shows a compositional bias: basic and acidic residues.

This sequence belongs to the GrpE family. As to quaternary structure, homodimer.

The protein localises to the cytoplasm. Functionally, participates actively in the response to hyperosmotic and heat shock by preventing the aggregation of stress-denatured proteins, in association with DnaK and GrpE. It is the nucleotide exchange factor for DnaK and may function as a thermosensor. Unfolded proteins bind initially to DnaJ; upon interaction with the DnaJ-bound protein, DnaK hydrolyzes its bound ATP, resulting in the formation of a stable complex. GrpE releases ADP from DnaK; ATP binding to DnaK triggers the release of the substrate protein, thus completing the reaction cycle. Several rounds of ATP-dependent interactions between DnaJ, DnaK and GrpE are required for fully efficient folding. The chain is Protein GrpE from Streptococcus pneumoniae (strain ATCC BAA-255 / R6).